The following is a 457-amino-acid chain: tRNA (guanine(37)-N(1))-methyltransferase (457 aa).

S-adenosyl-L-methionine-binding positions include His240, 278-279 (DL), 306-307 (DG), and Asn338.

Belongs to the class I-like SAM-binding methyltransferase superfamily. TRM5/TYW2 family. As to quaternary structure, monomer.

It localises to the mitochondrion matrix. Its subcellular location is the nucleus. It is found in the cytoplasm. It catalyses the reaction guanosine(37) in tRNA + S-adenosyl-L-methionine = N(1)-methylguanosine(37) in tRNA + S-adenosyl-L-homocysteine + H(+). Its function is as follows. Specifically methylates the N1 position of guanosine-37 in various cytoplasmic and mitochondrial tRNAs. Methylation is not dependent on the nature of the nucleoside 5' of the target nucleoside. This is the first step in the biosynthesis of wybutosine (yW), a modified base adjacent to the anticodon of tRNAs and required for accurate decoding. This is tRNA (guanine(37)-N(1))-methyltransferase from Drosophila melanogaster (Fruit fly).